Here is a 203-residue protein sequence, read N- to C-terminus: Small ribosomal subunit protein uS5 (203 aa).

The S5 DRBM domain occupies 49–112 (FEERVVKIKR…KNANNNLIKV (64 aa)).

This sequence belongs to the universal ribosomal protein uS5 family. As to quaternary structure, part of the 30S ribosomal subunit. Contacts proteins S4 and S8.

Its function is as follows. With S4 and S12 plays an important role in translational accuracy. Located at the back of the 30S subunit body where it stabilizes the conformation of the head with respect to the body. This Ureaplasma parvum serovar 3 (strain ATCC 700970) protein is Small ribosomal subunit protein uS5.